A 300-amino-acid polypeptide reads, in one-letter code: Non-secreted LysM effector LysM16 (300 aa).

The LysM domain occupies 176–222 (EWHTVFSGDTCQLIEAEYGITLEKFIALNTYVNSTCGNIWPDYAYCV).

Belongs to the secreted LysM effector family.

Functionally, non-secreted LysM effector that might be involved in manipulation of host defenses for successful infection. The polypeptide is Non-secreted LysM effector LysM16 (Penicillium expansum (Blue mold rot fungus)).